Consider the following 924-residue polypeptide: MRADLITIQQTLTPEAATVLNQSIAEATRRNHGHTTPLHVAATLLSSSSGYLRQACIKSHPNSSHPLQCRALELCFSVALERLPTTSTTTTTTSSSSSSSPSQTQEPLLSNALTAALKRAQAHQRRGCPEQQQQPLLAVKVELEQLIISILDDPSVSRVMREASFSSPAVKSAIEQSLIGNSVSNSRQTGSPGIINPSAIGFGYRSVPAPVNRNLYLNPRLQQPGVGMQSGMMIQRTDEAKRVIEIMIRTRKRNPVLVGDSEPHILVKEILEKIENGEFSDGALRNFQVIRLEKELVSQLATRLGEISGLVETRIGGGGVVLDLGDLKWLVEHPAANGGAVVEMRKLLERYKGRLCFIGTATCETYLRCQVYYPSMENDWDLQAIPIAAKSSLPAIFPRLGSNNNNNAMLLSNNIISIESISPTRSFQIPMSKMSCCSRCLQSYENDVAKVEKDLTGDNRSVLPQWLQNAKANDDGDKKLTKDQQIVELQKKWNDLCLRLHPNQSVSERIAPSTLSMMKINTRSDITPPGSPVGTDLVLGRPNRGLSSPEKKTREARFGKLGDSFDIDLFKKLLKGLAKSVWWQHDAASSVAAAITECKHGNGKSKGDIWLMFTGPDRAGKSKMASALSDLVSGSQPITISLGSSSRMDDGLNIRGKTALDRFAEAVRRNPFAVIVLEDIDEADILLRNNVKIAIERGRICDSYGREVSLGNVIIILTANSSLGSAKNVASIDETRLESLVNKGWELRLSVCNSSKTRKRKPNWLYSDNDQTKQRKEICFDLNEAAEFDSSSDVTVEHDQEDNGNLVHKLVGLVDDAILFRPVDFDSIKSKTAESLKKRFSNGLADGLTVEIEDDALERIAGAIWLSKISLEEWLEEAMGSSLNSVKSRVSSSEDSVIRIELEDDLNDRISGGYLPSSIRTVVV.

The Clp R domain maps to Ile-8–Asn-181. The interval Leu-12–Leu-83 is repeat 1. Residues Thr-86–Gln-105 show a composition bias toward low complexity. The disordered stretch occupies residues Thr-86–Pro-107. The repeat 2 stretch occupies residues Leu-109–Asn-181. Residues Thr-522–Lys-552 form a disordered region. The short motif at Phe-780–Glu-784 is the EAR element.

The protein belongs to the ClpA/ClpB family. As to quaternary structure, interacts probably with TPL/TPR in an EAR-motif dependent manner. Expressed in seedlings and leaves. Detected in roots and axillary branches.

Its function is as follows. Probable component of a transcriptional corepressor complex that acts specifically in the karrikin pathway. Controls seedling growth redundantly with SMAX1, but is not involved in leaf morphology, shoot branching or germination control. This chain is Protein SMAX1-LIKE 2, found in Arabidopsis thaliana (Mouse-ear cress).